The following is a 393-amino-acid chain: Alpha-1,2 mannosyltransferase KTR1 (393 aa).

Residues 1–16 (MAKIMIPASKQPVYKK) are Cytoplasmic-facing. A helical; Signal-anchor for type II membrane protein membrane pass occupies residues 17-34 (LGLLLVAVFTVYVFFHGA). Residues 35–68 (QYARGSAPSPKYSTVLSSGSGYKYSKVELPKYTG) are stem region. Over 35 to 393 (QYARGSAPSP…KPAGWQNHIG (359 aa)) the chain is Lumenal. The catalytic stretch occupies residues 69–393 (PREKATFVTL…KPAGWQNHIG (325 aa)). An N-linked (GlcNAc...) asparagine glycan is attached at N120. E280 functions as the Nucleophile in the catalytic mechanism.

This sequence belongs to the glycosyltransferase 15 family. Mn(2+) is required as a cofactor. In terms of processing, N-glycosylated.

It is found in the golgi apparatus membrane. It functions in the pathway protein modification; protein glycosylation. Its function is as follows. Mannosyltransferase that transfers a mannose residue from GDP-mannose to a range of acceptors in vitro, forming an alpha-(1-&gt;2)-D-mannosyl-D-mannose linkage. The protein is Alpha-1,2 mannosyltransferase KTR1 (KTR1) of Saccharomyces cerevisiae (strain ATCC 204508 / S288c) (Baker's yeast).